Here is a 162-residue protein sequence, read N- to C-terminus: MGLETEKTDVQLFMDDDSYSHHSGLEYADPEKFADSGQDRDPHQLNSHLKLGFEDVIAEPVTTHSFDKVWICSHALFEISKYVMYKFLTVFLAIPLAFLAGILFATLSCLHIWIIMPFVKTCLMVLPSVQTIWKSVTDAIVAPLCTSIGRSFSSVSLQLSQD.

The Cytoplasmic segment spans residues 1–86 (MGLETEKTDV…FEISKYVMYK (86 aa)). Tyrosine 19 is modified (phosphotyrosine; by SRC). Serine 20 and serine 23 each carry phosphoserine. Phosphotyrosine; by SRC is present on tyrosine 27. Serine 36 carries the post-translational modification Phosphoserine. An intramembrane region (helical) is located at residues 87–107 (FLTVFLAIPLAFLAGILFATL). At 108–162 (SCLHIWIIMPFVKTCLMVLPSVQTIWKSVTDAIVAPLCTSIGRSFSSVSLQLSQD) the chain is on the cytoplasmic side.

It belongs to the caveolin family. In terms of assembly, monomer or homodimer. Interacts with CAV1; the interaction forms a stable heterooligomeric complex that is required for targeting to lipid rafts and for caveolae formation. Tyrosine phosphorylated forms do not form heterooligomers with the Tyr-19-phosphorylated form existing as a monomer or dimer, and the Tyr-27-form as a monomer only. Interacts (tyrosine phosphorylated form) with the SH2 domain-containing proteins, RASA1, NCK1 and SRC. Interacts (tyrosine phosphorylated form) with INSR, the interaction (Tyr-27-phosphorylated form) is increased on insulin stimulation. Interacts (Tyr-19 phosphorylated form) with MAPK1 (phosphorylated form); the interaction, promoted by insulin, leads to nuclear location and MAPK1 activation. Interacts with STAT3; the interaction is increased on insulin-induced tyrosine phosphorylation leading to STAT activation. Post-translationally, phosphorylated on serine and tyrosine residues. CAV1 promotes phosphorylation on Ser-23 which then targets the complex to the plasma membrane, lipid rafts and caveolae. Phosphorylation on Ser-36 appears to modulate mitosis in endothelial cells. Phosphorylation on both Tyr-19 and Tyr-27 is required for insulin-induced 'Ser-727' phosphorylation of STAT3 and its activation. Phosphorylation on Tyr-19 is required for insulin-induced phosphorylation of MAPK1 and DNA binding of STAT3. Tyrosine phosphorylation is induced by both EGF and insulin (By. similarity).

The protein resides in the nucleus. The protein localises to the cytoplasm. It is found in the golgi apparatus membrane. It localises to the cell membrane. Its subcellular location is the membrane. The protein resides in the caveola. In terms of biological role, may act as a scaffolding protein within caveolar membranes. Interacts directly with G-protein alpha subunits and can functionally regulate their activity. Acts as an accessory protein in conjunction with CAV1 in targeting to lipid rafts and driving caveolae formation. The Ser-36 phosphorylated form has a role in modulating mitosis in endothelial cells. Positive regulator of cellular mitogenesis of the MAPK signaling pathway. Required for the insulin-stimulated nuclear translocation and activation of MAPK1 and STAT3, and the subsequent regulation of cell cycle progression. This Aotus nancymaae (Ma's night monkey) protein is Caveolin-2 (CAV2).